A 1190-amino-acid chain; its full sequence is MACNLSPVNEMADSITSSTPSEIVYGGPGSPDEHRTMSDKVQTMASAIYRELETMIKVHGEDGVKTLMPLVVNVLEALDLAYLERDEQTAELEMLKEDNEQLQTQYEREKALRKQTEQKYIEIEDTLIGQNKELDKKIESLESIMRMLELKAKNATDHASRLEEREVEQKLEFDRLHERYNTLLRTHVDHMERTKYLMGSEKFELMQNMPLPNMQLRNKMGMAASVDASSIRGVSDLISAHMTQSTTMDVNLANHITNEDWQDEFSSDIEPSPRDIPQSSADALTSPITTKEPTPKREAASPKQSEEEEADETTSVDPKENNDLLGADLTDDESDWNGLGLIPRRHRPNEMLDDDDTSDDGSLGMGREVENLIKENSELLDMKNALNIVKNDLINQVDELNSENMILRDENLSRQMVSEKMQEQITKHEEEIKTLKQKLMEKENEQEEDDVPMAMRKRFTRSEMQRVLMDRNAYKEKLMELEESIKWTEMQRAKKMQQQQQNVNQKKSGGIWEFFSSLLGDSVTPPASSRGNRASSSRGKMTRSVEYIDPDMISERRAAERREQYKLVREHVKKEDGRIEAYGWSLPNVEAEVSSVPIPVCCRPLLDNEPSLKIWCATGVVLRGGRDERGQWIVGDPIYFAPASMKKTKTSNHRPELEDEIKRARNLDARESELDEWQSSSLVWVVSSNQGKSLIAVLDANNPNNIIETFPACDSHLLCIQAVSGVMEGEPEMNEEQSKKYLSGGGKIKDLPEGLDGTDLGACEWVELRKMEDSEDGVPTYCSNDMKPSPKRTRDFSISEVAPVDSSAPVKEDPLPPPANRPGGRAALPPHIRDAMSKYDGVSGQMSGALPTVWMGGQNQYIYIHSAVTAWKQCLRRIKMPDAVLSIVHYKSRIFAALANGTIAIFHRNKHGEWSDEGYHSLRVGSATSSVRSLCLVSTNIWATYKNCVVVLDAESLQIVKVFAAHPRKDSQVRNMQWVGAGVWLSIRLDSTLRLYHAHTYEHLQDVDIEPYVTKMLGTSKLDFSYMRTTALLVSNRRLWIGTGTGVIISVPFSGQLEKKIETKDSKRPAGPGGLVRVYGATSENATNDEKTNDDFIPYCNLAHAQLSFHGHKDSVKFFLGVPGASKNGEDESAEVTLRRMLIMSGGDGYIDFRIGEENEPELTGQSIRPRDMSHLIIWEVDAELPILSK.

The tract at residues 1–35 (MACNLSPVNEMADSITSSTPSEIVYGGPGSPDEHR) is disordered. The region spanning 24–112 (VYGGPGSPDE…QTQYEREKAL (89 aa)) is the RH1 domain. Residues 78-165 (LDLAYLERDE…TDHASRLEER (88 aa)) adopt a coiled-coil conformation. Positions 263 to 364 (DEFSSDIEPS…DDTSDDGSLG (102 aa)) are disordered. Over residues 277 to 292 (PQSSADALTSPITTKE) the composition is skewed to polar residues. Residues 383–491 (KNALNIVKND…EESIKWTEMQ (109 aa)) are a coiled coil. One can recognise an RH2 domain in the interval 456-542 (RKRFTRSEMQ…RASSSRGKMT (87 aa)). The tract at residues 775 to 829 (EDGVPTYCSNDMKPSPKRTRDFSISEVAPVDSSAPVKEDPLPPPANRPGGRAALP) is disordered.

Belongs to the JIP scaffold family. Expressed in neurons of the ventral cord, retrovesicular and preanal ganglia and nerve ring, intestinal cells, seam and hypodermal cells, body wall, head muscle and pharynx.

It is found in the cytoplasm. The protein localises to the perinuclear region. Its function is as follows. The JNK-interacting protein (JIP) group of scaffold proteins selectively mediates JNK signaling by aggregating specific components of the MAPK cascade to form a functional JNK signaling module. May function as a regulator of synaptic vesicle transport, through interactions with the JNK-signaling components and motor proteins. Binds specific components of the JNK signaling pathway namely jnk-1, jkk-1 and sek-1. Associates with components of the motor protein, kinesin-1. Pre-assembled unc-16 scaffolding complexes are then transported as a cargo of kinesin, to the required subcellular location. Regulates the retrograde transport of autophagosomes from the neurites to the cell body of AIY interneurons. This is JNK-interacting protein from Caenorhabditis elegans.